The following is a 452-amino-acid chain: tRNA(Ile)-lysidine synthase (452 aa).

27–32 contacts ATP; sequence SGGIDS.

This sequence belongs to the tRNA(Ile)-lysidine synthase family.

The protein resides in the cytoplasm. The enzyme catalyses cytidine(34) in tRNA(Ile2) + L-lysine + ATP = lysidine(34) in tRNA(Ile2) + AMP + diphosphate + H(+). Ligates lysine onto the cytidine present at position 34 of the AUA codon-specific tRNA(Ile) that contains the anticodon CAU, in an ATP-dependent manner. Cytidine is converted to lysidine, thus changing the amino acid specificity of the tRNA from methionine to isoleucine. The sequence is that of tRNA(Ile)-lysidine synthase from Persephonella marina (strain DSM 14350 / EX-H1).